The chain runs to 425 residues: Serine--tRNA ligase 1 (425 aa).

230 to 232 contributes to the L-serine binding site; it reads TSE. ATP is bound by residues 261–263 and Val277; that span reads RRE. Residue Glu284 coordinates L-serine. Position 348-351 (348-351) interacts with ATP; the sequence is ELTS. Thr382 contributes to the L-serine binding site.

The protein belongs to the class-II aminoacyl-tRNA synthetase family. Type-1 seryl-tRNA synthetase subfamily. In terms of assembly, homodimer. The tRNA molecule binds across the dimer.

The protein resides in the cytoplasm. It carries out the reaction tRNA(Ser) + L-serine + ATP = L-seryl-tRNA(Ser) + AMP + diphosphate + H(+). The enzyme catalyses tRNA(Sec) + L-serine + ATP = L-seryl-tRNA(Sec) + AMP + diphosphate + H(+). It participates in aminoacyl-tRNA biosynthesis; selenocysteinyl-tRNA(Sec) biosynthesis; L-seryl-tRNA(Sec) from L-serine and tRNA(Sec): step 1/1. Its function is as follows. Catalyzes the attachment of serine to tRNA(Ser). Is also able to aminoacylate tRNA(Sec) with serine, to form the misacylated tRNA L-seryl-tRNA(Sec), which will be further converted into selenocysteinyl-tRNA(Sec). The sequence is that of Serine--tRNA ligase 1 from Streptomyces avermitilis (strain ATCC 31267 / DSM 46492 / JCM 5070 / NBRC 14893 / NCIMB 12804 / NRRL 8165 / MA-4680).